A 618-amino-acid chain; its full sequence is MDATYTMAQTPVQGQPSFAYYPTESQSRQQHFTSHPFEMQYYGQVSSYPQQQAQQQHSMPEQQPVYAAQPMLNMHQMATTNAFRGALSMTPIASPQPTHLKPTIIVQQDSPALMPLDTRFVSNDFYGFPSTPPLSTSGSTISSPPSSNGSLHTPINDCFFSFEKVEGVKEGCESDVHCELLANTDWSRSDSPPLTPVFIQPQSLTASQSSDLLSAQIPCPSLSPSPSPDSATFISHPQSILSAEPSGSDFCDPRQLTVESSVGAPAELPPLPTLSCNEEEPKVVLGSATVTLPVHEGLSPSFSSSSEDPLGSLPTFDSFSDLDSEDEFANKLVDFHPIGNTYFQGDKRQRLGTYLLDEDEFLSERSLEDLDDQEAFAQSGLPSVESTDFLAVEGDATQSTEEMSSKKRVTSRRSLKKASTSESSSDSLAKKTQASATSRSGHSDTTSTVQQSTASSRQNSTANTSNSESPAAPVSVNRRGRKQSLTDDPSKTFVCSLCSRRFRRQEHLKRHYRSLHTQDKPFECHECGKKFSRSDNLAQHARTHGGGSIVMGVIDTNSSNTQPAFDEPEPRALGLALYEAANAATSKSTTSESSDGTISDTSSVGGRPAKKRRRDDHV.

The interval 394–488 is disordered; the sequence is GDATQSTEEM…RGRKQSLTDD (95 aa). Residues 406–416 are compositionally biased toward basic residues; sequence KKRVTSRRSLK. Low complexity-rich tracts occupy residues 417-432 and 443-458; these read KASTSESSSDSLAKKT and SDTTSTVQQSTASSRQ. Residues 459–469 show a composition bias toward polar residues; sequence NSTANTSNSES. C2H2-type zinc fingers lie at residues 493–516 and 522–544; these read FVCSLCSRRFRRQEHLKRHYRSLH and FECHECGKKFSRSDNLAQHARTH. The span at 582-597 shows a compositional bias: low complexity; it reads NAATSKSTTSESSDGT. Positions 582–618 are disordered; the sequence is NAATSKSTTSESSDGTISDTSSVGGRPAKKRRRDDHV. Residues 608 to 618 show a composition bias toward basic residues; that stretch reads PAKKRRRDDHV.

The protein resides in the nucleus. The protein localises to the cytoplasm. Its function is as follows. Transcription factor that is involved in the response to heat shock, oxidative stress, and poor nutrient conditions. Controls expression of oxidative stress response genes such as ccp1, cat1, cat2, sod2; as well as of heat shock genes such as hsf1, hsp30 and hsp90. Negatively controls the expression of the fumiquinazoline (fmq) cluster via binding to the STRE motifs at the fmqA-D promoters. Plays a role in virulence. The sequence is that of C2H2 finger domain transcription factor sebA from Aspergillus fumigatus (strain ATCC MYA-4609 / CBS 101355 / FGSC A1100 / Af293) (Neosartorya fumigata).